A 529-amino-acid polypeptide reads, in one-letter code: CTP synthase (529 aa).

Residues 1–266 are amidoligase domain; sequence MTKYIIVTGG…TKKIFNKLGL (266 aa). Residue Ser13 participates in CTP binding. Position 13 (Ser13) interacts with UTP. Position 14–19 (14–19) interacts with ATP; that stretch reads SVGKGT. Tyr54 is an L-glutamine binding site. Asp71 lines the ATP pocket. Asp71 and Glu141 together coordinate Mg(2+). Residues 148-150, 187-192, and Lys223 contribute to the CTP site; these read DIE and KTKPLQ. UTP-binding positions include 187 to 192 and Lys223; that span reads KTKPLQ. The Glutamine amidotransferase type-1 domain occupies 291–529; that stretch reads KIALVGKYTK…FLNFLSVASA (239 aa). Gly354 contributes to the L-glutamine binding site. The active-site Nucleophile; for glutamine hydrolysis is Cys381. Residues 382–385, Glu405, and Arg462 contribute to the L-glutamine site; that span reads FGMQ. Active-site residues include His506 and Glu508.

This sequence belongs to the CTP synthase family. Homotetramer.

The catalysed reaction is UTP + L-glutamine + ATP + H2O = CTP + L-glutamate + ADP + phosphate + 2 H(+). The enzyme catalyses L-glutamine + H2O = L-glutamate + NH4(+). It carries out the reaction UTP + NH4(+) + ATP = CTP + ADP + phosphate + 2 H(+). It functions in the pathway pyrimidine metabolism; CTP biosynthesis via de novo pathway; CTP from UDP: step 2/2. Its activity is regulated as follows. Allosterically activated by GTP, when glutamine is the substrate; GTP has no effect on the reaction when ammonia is the substrate. The allosteric effector GTP functions by stabilizing the protein conformation that binds the tetrahedral intermediate(s) formed during glutamine hydrolysis. Inhibited by the product CTP, via allosteric rather than competitive inhibition. Functionally, catalyzes the ATP-dependent amination of UTP to CTP with either L-glutamine or ammonia as the source of nitrogen. Regulates intracellular CTP levels through interactions with the four ribonucleotide triphosphates. This is CTP synthase from Sulfolobus acidocaldarius (strain ATCC 33909 / DSM 639 / JCM 8929 / NBRC 15157 / NCIMB 11770).